Reading from the N-terminus, the 369-residue chain is MSKRKIKEEMLQVIAPEIYGPPKKEEQDYKPRKLKRVKKKKKDDDDDELDDEVELLHATAPRRRVQWKGRRVRRVLRPGTTVVFTPGERSTRTYKRVYDEVYGDEDLLEQANERLGEFAYGKRHKDMLALPLDEGNPTPSLKPVTLQQVLPTLAPSEEKRGLKRESGDLAPTVQLMVPKRQRLEDVLEKMTVEPGLEPEVRVRPIKQVAPGLGVQTVDVQIPTTSSTSIATATEGMETQTSPVASAVADAAVQAAAAAASKTSTEVQTDPWMFRVSAPRRPRRSRKYGTASALLPEYALHPSIAPTPGYRGYTYRPRRRATTRRRTTTGTRRRRRRRQPVLAPISVRRVAREGGRTLVLPTARYHPSIV.

The segment at Ala-15–Asp-50 is disordered. A compositionally biased stretch (basic and acidic residues) spans Pro-22–Pro-31. Over residues Arg-32–Lys-41 the composition is skewed to basic residues. The residue at position 85 (Thr-85) is a Phosphothreonine; by host. At Ser-166 the chain carries Phosphoserine; by host. Positions Pro-307–Ala-342 are disordered. Residues Arg-315–Gln-338 are compositionally biased toward basic residues.

The protein belongs to the adenoviridae core-capsid bridging protein family. In terms of assembly, monomer. Homodimer. Exists in equilibrium between monomers and dimers in solution. Interacts with the histone-like nucleoprotein; this interactions bridge the virus core to the capsid. Interacts with core protein X; this interactions bridge the virus core to the capsid. Interacts with the endosome lysis protein VI; this interactions bridge the virus core to the capsid. Interacts with the peripentonal hexons. Interacts with host NPM1; this interaction might play a role in virus assembly.

It localises to the virion. The protein resides in the host nucleus. Its subcellular location is the host nucleolus. In terms of biological role, associates loosely with the viral DNA to form an outer shell around the nucleoprotein-DNA complex and links it with the capsid by binding the endosome lysis protein. Dissociates from the viral genome during entry. Might be involved in nuclear capsid assembly of the viral particles through its association with NPM1/nucleophosmin. The sequence is that of Core-capsid bridging protein from Homo sapiens (Human).